A 620-amino-acid chain; its full sequence is Guanylate cyclase soluble subunit beta-1 (620 aa).

His105 contacts heme. In terms of domain architecture, Guanylate cyclase spans 421–554; that stretch reads TILFSGIVGF…NTVNLTSRTE (134 aa).

Belongs to the adenylyl cyclase class-4/guanylyl cyclase family. The active enzyme is formed by a heterodimer of an alpha and a beta subunit. Heterodimer with GUCY1A1. Can also form inactive homodimers in vitro. The cofactor is heme.

The protein localises to the cytoplasm. The enzyme catalyses GTP = 3',5'-cyclic GMP + diphosphate. With respect to regulation, activated by nitric oxide in the presence of magnesium or manganese ions. In terms of biological role, mediates responses to nitric oxide (NO) by catalyzing the biosynthesis of the signaling molecule cGMP. This Mus musculus (Mouse) protein is Guanylate cyclase soluble subunit beta-1 (Gucy1b1).